The chain runs to 417 residues: Inhibitor of growth protein 3 (417 aa).

Disordered regions lie at residues 128–203 (TPSQ…YNTN) and 286–320 (QTLS…SSSS). The segment covering 136–152 (HHAHSHTPVEKRKHNPS) has biased composition (basic residues). Over residues 156-168 (GATDHVPEKKFKS) the composition is skewed to basic and acidic residues. Composition is skewed to low complexity over residues 189–203 (NNNS…YNTN), 286–295 (QTLSSSSTDS), and 307–320 (SSSQ…SSSS). The segment at 359–408 (PRYCICNQVSYGEMVGCDNQDCPIEWFHYGCVGLTEAPKGKWYCPQCTAA) adopts a PHD-type zinc-finger fold. 8 residues coordinate Zn(2+): C362, C364, C375, C380, H386, C389, C402, and C405.

Belongs to the ING family. In terms of assembly, interacts with H3K4me3 and to a lesser extent with H3K4me2. Component of the NuA4 histone acetyltransferase complex.

The protein localises to the nucleus. Component of the NuA4 histone acetyltransferase (HAT) complex which is involved in transcriptional activation of select genes principally by acetylation of nucleosomal histone H4 and H2A. This modification may both alter nucleosome - DNA interactions and promote interaction of the modified histones with other proteins which positively regulate transcription. NuA4 may also play a direct role in DNA repair when directly recruited to sites of DNA damage. This Gallus gallus (Chicken) protein is Inhibitor of growth protein 3 (ING3).